Reading from the N-terminus, the 424-residue chain is Tubulin gamma chain, nucleomorph (424 aa).

137-143 lines the GTP pocket; the sequence is NGGTGAG.

It belongs to the tubulin family.

Functionally, tubulin is the major constituent of microtubules. The gamma chain is found at microtubule organizing centers (MTOC) such as the spindle poles or the centrosome, suggesting that it is involved in the minus-end nucleation of microtubule assembly. This Guillardia theta (Cryptophyte) protein is Tubulin gamma chain, nucleomorph (tubG).